The sequence spans 409 residues: Tyrosine--tRNA ligase (409 aa).

The 'HIGH' region signature appears at 54-63; that stretch reads PTAPDIHLGH. The short motif at 238-242 is the 'KMSKS' region element; it reads KMSKS. K241 contributes to the ATP binding site. One can recognise an S4 RNA-binding domain in the interval 347-407; that stretch reads QGILRILREA…GKRKFARVKL (61 aa).

Belongs to the class-I aminoacyl-tRNA synthetase family. TyrS type 2 subfamily. In terms of assembly, homodimer.

Its subcellular location is the cytoplasm. The catalysed reaction is tRNA(Tyr) + L-tyrosine + ATP = L-tyrosyl-tRNA(Tyr) + AMP + diphosphate + H(+). Its function is as follows. Catalyzes the attachment of tyrosine to tRNA(Tyr) in a two-step reaction: tyrosine is first activated by ATP to form Tyr-AMP and then transferred to the acceptor end of tRNA(Tyr). The sequence is that of Tyrosine--tRNA ligase from Bordetella bronchiseptica (strain ATCC BAA-588 / NCTC 13252 / RB50) (Alcaligenes bronchisepticus).